The primary structure comprises 652 residues: Phosphomethylpyrimidine synthase (652 aa).

Residues Asn-257, Met-286, Tyr-315, His-351, 371–373, 412–415, and Glu-451 contribute to the substrate site; these read SRG and DGLR. His-455 lines the Zn(2+) pocket. Tyr-478 serves as a coordination point for substrate. His-519 lines the Zn(2+) pocket. [4Fe-4S] cluster is bound by residues Cys-599, Cys-602, and Cys-607.

This sequence belongs to the ThiC family. In terms of assembly, homodimer. Requires [4Fe-4S] cluster as cofactor.

It catalyses the reaction 5-amino-1-(5-phospho-beta-D-ribosyl)imidazole + S-adenosyl-L-methionine = 4-amino-2-methyl-5-(phosphooxymethyl)pyrimidine + CO + 5'-deoxyadenosine + formate + L-methionine + 3 H(+). The protein operates within cofactor biosynthesis; thiamine diphosphate biosynthesis. Its function is as follows. Catalyzes the synthesis of the hydroxymethylpyrimidine phosphate (HMP-P) moiety of thiamine from aminoimidazole ribotide (AIR) in a radical S-adenosyl-L-methionine (SAM)-dependent reaction. The chain is Phosphomethylpyrimidine synthase from Thiobacillus denitrificans (strain ATCC 25259 / T1).